A 269-amino-acid polypeptide reads, in one-letter code: Probable aquaporin TIP5-1 (269 aa).

Helical transmembrane passes span 19–39, 54–74, 84–104, 139–159, and 177–197; these read AYFA…GSTI, SLMA…FIAA, AVTF…IFYW, FGAG…VHVA, and ALGA…AGSL. Positions 82–84 match the NPA 1 motif; that stretch reads NPA. Residues 203 to 205 carry the NPA 2 motif; that stretch reads NPA. Residues 223 to 243 traverse the membrane as a helical segment; the sequence is YWAGPMVGAAVAALVHQALVF.

Belongs to the MIP/aquaporin (TC 1.A.8) family. TIP (TC 1.A.8.10) subfamily. As to expression, expressed in leaves and anthers, and at lower levels in roots.

The protein localises to the vacuole membrane. In terms of biological role, aquaporins facilitate the transport of water and small neutral solutes across cell membranes. May be involved in transport from the vacuolar compartment to the cytoplasm. The sequence is that of Probable aquaporin TIP5-1 (TIP5;1) from Oryza sativa subsp. japonica (Rice).